The following is a 101-amino-acid chain: MRPNFSKGLLPAIVINEETKEVLMLAYMNEEAYEKTLKTKKTWFYSRSRQTLWNKGATSGHVQHVKSLYLDCDQDAIVITVNQVGVACHTGEKTCFHHKII.

Aspartate 71 is a Mg(2+) binding site. Cysteine 72 provides a ligand contact to Zn(2+). 2 residues coordinate Mg(2+): aspartate 73 and aspartate 75. Residues cysteine 88 and cysteine 95 each coordinate Zn(2+).

This sequence belongs to the PRA-CH family. As to quaternary structure, homodimer. The cofactor is Mg(2+). Zn(2+) serves as cofactor.

The protein resides in the cytoplasm. It catalyses the reaction 1-(5-phospho-beta-D-ribosyl)-5'-AMP + H2O = 1-(5-phospho-beta-D-ribosyl)-5-[(5-phospho-beta-D-ribosylamino)methylideneamino]imidazole-4-carboxamide. The protein operates within amino-acid biosynthesis; L-histidine biosynthesis; L-histidine from 5-phospho-alpha-D-ribose 1-diphosphate: step 3/9. In terms of biological role, catalyzes the hydrolysis of the adenine ring of phosphoribosyl-AMP. The protein is Phosphoribosyl-AMP cyclohydrolase of Bacillus cytotoxicus (strain DSM 22905 / CIP 110041 / 391-98 / NVH 391-98).